The sequence spans 275 residues: uncharacterized protein (275 aa).

Cys-97, Cys-102, Cys-136, and Cys-140 together coordinate [4Fe-4S] cluster. Cys-140 lines the siroheme pocket.

The protein belongs to the nitrite and sulfite reductase 4Fe-4S domain family.

This is an uncharacterized protein from Methanocaldococcus jannaschii (strain ATCC 43067 / DSM 2661 / JAL-1 / JCM 10045 / NBRC 100440) (Methanococcus jannaschii).